Reading from the N-terminus, the 338-residue chain is D-erythrose-4-phosphate dehydrogenase (338 aa).

Arg-11–Ile-12 contributes to the NAD(+) binding site. Substrate-binding positions include Ser-153–Thr-155, Arg-199, Thr-212–Lys-213, and Arg-235. Cys-154 serves as the catalytic Nucleophile. Residue Asn-317 participates in NAD(+) binding.

This sequence belongs to the glyceraldehyde-3-phosphate dehydrogenase family. Epd subfamily. Homotetramer.

It localises to the cytoplasm. It catalyses the reaction D-erythrose 4-phosphate + NAD(+) + H2O = 4-phospho-D-erythronate + NADH + 2 H(+). It functions in the pathway cofactor biosynthesis; pyridoxine 5'-phosphate biosynthesis; pyridoxine 5'-phosphate from D-erythrose 4-phosphate: step 1/5. Functionally, catalyzes the NAD-dependent conversion of D-erythrose 4-phosphate to 4-phosphoerythronate. The protein is D-erythrose-4-phosphate dehydrogenase of Shewanella oneidensis (strain ATCC 700550 / JCM 31522 / CIP 106686 / LMG 19005 / NCIMB 14063 / MR-1).